The chain runs to 229 residues: PKHD-type hydroxylase Rpal_3968 (229 aa).

A Fe2OG dioxygenase domain is found at 78-180 (QIFPPLFNRY…RVASFFWLQS (103 aa)). 3 residues coordinate Fe cation: histidine 98, aspartate 100, and histidine 161. Arginine 171 provides a ligand contact to 2-oxoglutarate.

Fe(2+) is required as a cofactor. L-ascorbate serves as cofactor.

The protein is PKHD-type hydroxylase Rpal_3968 of Rhodopseudomonas palustris (strain TIE-1).